The following is a 370-amino-acid chain: Flagellar P-ring protein (370 aa).

The signal sequence occupies residues 1 to 21; it reads MKLLLFILMISSIIIVPVGQA.

The protein belongs to the FlgI family. As to quaternary structure, the basal body constitutes a major portion of the flagellar organelle and consists of four rings (L,P,S, and M) mounted on a central rod.

The protein localises to the periplasm. It is found in the bacterial flagellum basal body. In terms of biological role, assembles around the rod to form the L-ring and probably protects the motor/basal body from shearing forces during rotation. The chain is Flagellar P-ring protein from Pseudoalteromonas atlantica (strain T6c / ATCC BAA-1087).